The following is a 43-amino-acid chain: Myotoxin-2 (43 aa).

3 disulfides stabilise this stretch: cysteine 4–cysteine 36, cysteine 11–cysteine 30, and cysteine 18–cysteine 37.

Belongs to the crotamine-myotoxin family. As to quaternary structure, monomer. Expressed by the venom gland.

The protein localises to the secreted. Its function is as follows. Cationic peptide that possesses multiple functions. It acts as a cell-penetrating peptide (CPP), and as a potent voltage-gated potassium channel (Kv) inhibitor. It exhibits antimicrobial activities, hind limb paralysis, and severe muscle necrosis by a non-enzymatic mechanism. The chain is Myotoxin-2 from Crotalus concolor (Midget faded rattlesnake).